Here is a 143-residue protein sequence, read N- to C-terminus: Large ribosomal subunit protein uL11 (143 aa).

It belongs to the universal ribosomal protein uL11 family. In terms of assembly, part of the ribosomal stalk of the 50S ribosomal subunit. Interacts with L10 and the large rRNA to form the base of the stalk. L10 forms an elongated spine to which L12 dimers bind in a sequential fashion forming a multimeric L10(L12)X complex. In terms of processing, one or more lysine residues are methylated.

Its function is as follows. Forms part of the ribosomal stalk which helps the ribosome interact with GTP-bound translation factors. The polypeptide is Large ribosomal subunit protein uL11 (Novosphingobium aromaticivorans (strain ATCC 700278 / DSM 12444 / CCUG 56034 / CIP 105152 / NBRC 16084 / F199)).